Here is a 404-residue protein sequence, read N- to C-terminus: XK-related protein 8 (404 aa).

The next 8 membrane-spanning stretches (helical) occupy residues 14 to 34, 44 to 64, 169 to 189, 209 to 229, 232 to 252, 262 to 282, 293 to 313, and 324 to 344; these read FVFSVIGACTFLVDWGSDVWL, VTWFWVLVGLMALSSFVVQTF, AVQFVSIAASTTSIAWMVVDY, LIYFLWNLLLIAPRVAALALC, VLSGYMAAHFLMLWSAFALWA, SVAGEWLYRATVGLIWYFSWF, SAIYHSFISTDGAILLATWWC, and ALALLIALPLFHFLGLLFKAL.

It belongs to the XK family.

It is found in the cell membrane. It catalyses the reaction a 1,2-diacyl-sn-glycero-3-phospho-L-serine(in) = a 1,2-diacyl-sn-glycero-3-phospho-L-serine(out). In terms of biological role, phospholipid scramblase that promotes phosphatidylserine exposure on apoptotic cell surface, possibly by mediating phospholipid scrambling. Phosphatidylserine is a specific marker only present at the surface of apoptotic cells and acts as a specific signal for engulfment. The protein is XK-related protein 8 of Gasterosteus aculeatus (Three-spined stickleback).